The following is a 460-amino-acid chain: Homocitrate synthase (460 aa).

The 256-residue stretch at 3 to 258 (VGILDSTLRE…IEVVKLNKLQ (256 aa)) folds into the Pyruvate carboxyltransferase domain. Residue Arg11 participates in 2-oxoglutarate binding. Glu12 is a Mg(2+) binding site. Residues His75, Arg135, and Thr169 each contribute to the 2-oxoglutarate site. Residues His197 and His199 each coordinate Mg(2+). Residue His291 is the Proton acceptor of the active site.

This sequence belongs to the alpha-IPM synthase/homocitrate synthase family. Homocitrate synthase LYS20/LYS21 subfamily. As to quaternary structure, forms a homotetramer in the absence of lysine, and is in hexadecamer-octamer equilibrium in the presence of lysine. Mg(2+) serves as cofactor. Mn(2+) is required as a cofactor.

The catalysed reaction is acetyl-CoA + 2-oxoglutarate + H2O = (2R)-homocitrate + CoA + H(+). Its pathway is amino-acid biosynthesis; L-lysine biosynthesis via AAA pathway; L-alpha-aminoadipate from 2-oxoglutarate: step 1/5. Inhibited by lysine. Functionally, catalyzes the aldol-type condensation of 2-oxoglutarate with acetyl-CoA to yield homocitrate. Carries out the first step of the alpha-aminoadipate (AAA) lysine biosynthesis pathway. In Sulfurisphaera tokodaii (strain DSM 16993 / JCM 10545 / NBRC 100140 / 7) (Sulfolobus tokodaii), this protein is Homocitrate synthase.